We begin with the raw amino-acid sequence, 338 residues long: Glyceraldehyde-3-phosphate dehydrogenase 1 (338 aa).

NAD(+)-binding positions include 13–14 and Gly-111; that span reads TI. A D-glyceraldehyde 3-phosphate-binding site is contributed by 140 to 142; that stretch reads SCN. Cys-141 functions as the Nucleophile in the catalytic mechanism. Arg-169 contacts NAD(+). 195–196 is a D-glyceraldehyde 3-phosphate binding site; sequence HG. Gln-300 contributes to the NAD(+) binding site.

This sequence belongs to the glyceraldehyde-3-phosphate dehydrogenase family. Homotetramer.

The protein resides in the cytoplasm. It carries out the reaction D-glyceraldehyde 3-phosphate + phosphate + NADP(+) = (2R)-3-phospho-glyceroyl phosphate + NADPH + H(+). The catalysed reaction is D-glyceraldehyde 3-phosphate + phosphate + NAD(+) = (2R)-3-phospho-glyceroyl phosphate + NADH + H(+). The protein operates within carbohydrate degradation; glycolysis; pyruvate from D-glyceraldehyde 3-phosphate: step 1/5. This chain is Glyceraldehyde-3-phosphate dehydrogenase 1, found in Methanosarcina barkeri (strain Fusaro / DSM 804).